The following is a 249-amino-acid chain: Serine 3-dehydrogenase (249 aa).

6 to 30 (LITGATSGFGQATAQRFVKEGWKVI) lines the NADP(+) pocket. S135 contributes to the substrate binding site. Y148 serves as the catalytic Proton acceptor.

Belongs to the short-chain dehydrogenases/reductases (SDR) family. In terms of assembly, homotetramer.

The enzyme catalyses L-serine + NADP(+) = aminoacetaldehyde + CO2 + NADPH. In terms of biological role, catalyzes the oxidation of the hydroxyl group of serine to form 2-aminomalonate semialdehyde which is spontaneously converted into 2-aminoacetaldehyde and CO(2). Also acts on D-serine, L-glycerate, D-glycerate and 2-methyl-DL-serine. Does not act on O-methyl-DL-serine and L-threonine. This is Serine 3-dehydrogenase (sdh) from Rhizobium radiobacter (Agrobacterium tumefaciens).